Consider the following 188-residue polypeptide: uncharacterized protein (188 aa).

This is an uncharacterized protein from Homo sapiens (Human).